The chain runs to 49 residues: Large ribosomal subunit protein bL33B (49 aa).

It belongs to the bacterial ribosomal protein bL33 family.

This Staphylococcus epidermidis (strain ATCC 12228 / FDA PCI 1200) protein is Large ribosomal subunit protein bL33B (rpmG2).